The primary structure comprises 845 residues: Protein translocase subunit SecA 1 (845 aa).

ATP-binding positions include Gln91, 109–113 (GEGKT), and Asp498. A disordered region spans residues 795-845 (TDFGTAQHVSAEDGKEKAKKQPIVKGDKVGRNDPCPCGSGKKYKNCHGKEE). The Zn(2+) site is built by Cys829, Cys831, Cys840, and His841. Basic residues predominate over residues 835–845 (KKYKNCHGKEE).

It belongs to the SecA family. In terms of assembly, monomer and homodimer. Part of the essential Sec protein translocation apparatus which comprises SecA, SecYEG and auxiliary proteins SecDF. Other proteins may also be involved. The cofactor is Zn(2+).

The protein resides in the cell membrane. It localises to the cytoplasm. The enzyme catalyses ATP + H2O + cellular proteinSide 1 = ADP + phosphate + cellular proteinSide 2.. Functionally, part of the Sec protein translocase complex. Interacts with the SecYEG preprotein conducting channel. Has a central role in coupling the hydrolysis of ATP to the transfer of proteins into and across the cell membrane, serving as an ATP-driven molecular motor driving the stepwise translocation of polypeptide chains across the membrane. The protein is Protein translocase subunit SecA 1 of Staphylococcus haemolyticus (strain JCSC1435).